The following is a 162-amino-acid chain: UPF0114 protein PST_0950 (162 aa).

3 helical membrane-spanning segments follow: residues 15–35 (LLAP…IKFF), 53–73 (LVLT…LVMV), and 136–156 (LMWY…MGYM).

Belongs to the UPF0114 family.

Its subcellular location is the cell membrane. In Stutzerimonas stutzeri (strain A1501) (Pseudomonas stutzeri), this protein is UPF0114 protein PST_0950.